We begin with the raw amino-acid sequence, 294 residues long: PAK4-inhibitor INKA2 (294 aa).

Disordered regions lie at residues 50–143 (ISGG…STLM), 170–198 (PELE…RELG), and 223–290 (LKEK…DINT). Residues 85 to 99 (SPSNQASLGSTSSGK) are compositionally biased toward polar residues. The inka box stretch occupies residues 134-177 (EPDDWTSTLMSRGRNRQPLVLGDNVFADLVGNWLDLPELEKGGE). Over residues 171-198 (ELEKGGEKGETGEAGEPKGGRGQPRELG) the composition is skewed to basic and acidic residues. Positions 241 to 253 (RSQKVKKRSHSKG) are enriched in basic residues.

This sequence belongs to the INKA family. As to quaternary structure, interacts with PAK4.

Its subcellular location is the nucleus. Functionally, inhibitor of the serine/threonine-protein kinase PAK4. Acts by binding PAK4 in a substrate-like manner, inhibiting the protein kinase activity. The polypeptide is PAK4-inhibitor INKA2 (Bos taurus (Bovine)).